Here is a 170-residue protein sequence, read N- to C-terminus: Photosystem I assembly protein Ycf3 (170 aa).

TPR repeat units follow at residues 35–68, 72–105, and 120–153; these read AFTYYRDGMLAQSEGNYAEALQNYYEATRLEIDP, SYILYNIGLIHTSNGEHTKALEYYFRALERNPFL, and GEQAILQGDSEIAEAWFDQAAEYWKQAIALTPGN.

Belongs to the Ycf3 family.

It localises to the plastid. The protein localises to the chloroplast thylakoid membrane. In terms of biological role, essential for the assembly of the photosystem I (PSI) complex. May act as a chaperone-like factor to guide the assembly of the PSI subunits. This is Photosystem I assembly protein Ycf3 from Agrostis stolonifera (Creeping bentgrass).